The following is a 367-amino-acid chain: Heparan sulfate glucosamine 3-O-sulfotransferase 2 (367 aa).

The Cytoplasmic portion of the chain corresponds to 1–19 (MAYRVLGRAGPPQPRRARR). The helical; Signal-anchor for type II membrane protein transmembrane segment at 20–39 (LLFAFTLSLSCTYLCYSFLC) threads the bilayer. The Lumenal segment spans residues 40–367 (CCDGLGQSRL…ETVGQDFRWE (328 aa)). A disordered region spans residues 66-115 (LLAKSRPCDPPGPTPSEPSAPSAPAAAAPAPRLSGSNHSGSPKPGTKRLP). Over residues 73–83 (CDPPGPTPSEP) the composition is skewed to pro residues. Low complexity predominate over residues 84–96 (SAPSAPAAAAPAP). N102 carries N-linked (GlcNAc...) asparagine glycosylation. Position 124-128 (124-128 (KGGTR)) interacts with 3'-phosphoadenylyl sulfate. Substrate-binding positions include 146–152 (EPHFFDR) and 177–180 (KTPS). An N-linked (GlcNAc...) asparagine glycan is attached at N193. 3'-phosphoadenylyl sulfate-binding residues include R205 and S213. N-linked (GlcNAc...) asparagine glycosylation is present at N235. 245 to 246 (WN) contacts substrate. N306 carries N-linked (GlcNAc...) asparagine glycosylation. A disulfide bridge links C313 with C325. 330–334 (KGRTH) provides a ligand contact to 3'-phosphoadenylyl sulfate.

This sequence belongs to the sulfotransferase 1 family.

It localises to the golgi apparatus membrane. It catalyses the reaction alpha-D-glucosaminyl-[heparan sulfate](n) + 3'-phosphoadenylyl sulfate = 3-sulfo-alpha-D-glucosaminyl-[heparan sulfate](n) + adenosine 3',5'-bisphosphate + H(+). Its function is as follows. Sulfotransferase that utilizes 3'-phospho-5'-adenylyl sulfate (PAPS) to catalyze the transfer of a sulfo group to an N-unsubstituted glucosamine linked to a 2-O-sulfo iduronic acid unit on heparan sulfate. Catalyzes the O-sulfation of glucosamine in GlcA2S-GlcNS. Unlike HS3ST1/3-OST-1, does not convert non-anticoagulant heparan sulfate to anticoagulant heparan sulfate. The sequence is that of Heparan sulfate glucosamine 3-O-sulfotransferase 2 (Hs3st2) from Mus musculus (Mouse).